The chain runs to 86 residues: MHGPHPTVKDIELSLAPEDIPVCNVQLDEEDYTDAVEPAQQAYRVVTECTKCSLPLRLVVECSHADIRALEQLLLGTLKLVCPRCV.

Residues 1-37 (MHGPHPTVKDIELSLAPEDIPVCNVQLDEEDYTDAVE) are E7 terminal domain. Residues 49–85 (CTKCSLPLRLVVECSHADIRALEQLLLGTLKLVCPRC) fold into a zinc finger. The short motif at 67-75 (IRALEQLLL) is the Nuclear export signal element.

This sequence belongs to the papillomaviridae E7 protein family. As to quaternary structure, homodimer. Homooligomer. Interacts with host RB1; this interaction induces dissociation of RB1-E2F1 complex thereby disrupting RB1 activity. Interacts with host EP300; this interaction represses EP300 transcriptional activity. Interacts with protein E2; this interaction inhibits E7 oncogenic activity. Interacts with host TMEM173/STING; this interaction impairs the ability of TMEM173/STING to sense cytosolic DNA and promote the production of type I interferon (IFN-alpha and IFN-beta). Highly phosphorylated.

The protein localises to the host cytoplasm. Its subcellular location is the host nucleus. Plays a role in viral genome replication by driving entry of quiescent cells into the cell cycle. Stimulation of progression from G1 to S phase allows the virus to efficiently use the cellular DNA replicating machinery to achieve viral genome replication. E7 protein has both transforming and trans-activating activities. Induces the disassembly of the E2F1 transcription factor from RB1, with subsequent transcriptional activation of E2F1-regulated S-phase genes. Interferes with host histone deacetylation mediated by HDAC1 and HDAC2, leading to transcription activation. Also plays a role in the inhibition of both antiviral and antiproliferative functions of host interferon alpha. Interaction with host TMEM173/STING impairs the ability of TMEM173/STING to sense cytosolic DNA and promote the production of type I interferon (IFN-alpha and IFN-beta). This is Protein E7 from Homo sapiens (Human).